Here is a 334-residue protein sequence, read N- to C-terminus: MNAPHTHDTVADGAAIEATVADIADTGRRALTRREQKEAYENNKLFKRIVRQVGQAIGDYNMIEQGDKVMVCLSGGKDSYAMLDVLLRLRERAPIDFDIVAVNLDQKQPGFPEHVLPEYLTQIGVPFHIENQDTYSIVKRLVPEGKTTCSLCSRLRRGILYRVAGELGATKIALGHHRDDILQTLLLNMFYGGKLKGMPPKLQSDDGRNVVIRPLAYVKETDLEKFAELREFPIIPCNLCGSQPNLKRAEMKALIRDWDKRFPGRVDNMFSALANVVPSHLMDTTQFPFASLRATGQADPQGDIAFDEEPCASGDDTATRDGARPISIVQFDDL.

The PP-loop motif motif lies at 74-79 (SGGKDS). [4Fe-4S] cluster contacts are provided by C149, C152, and C240.

This sequence belongs to the TtcA family. Homodimer. The cofactor is Mg(2+). [4Fe-4S] cluster serves as cofactor.

It localises to the cytoplasm. The catalysed reaction is cytidine(32) in tRNA + S-sulfanyl-L-cysteinyl-[cysteine desulfurase] + AH2 + ATP = 2-thiocytidine(32) in tRNA + L-cysteinyl-[cysteine desulfurase] + A + AMP + diphosphate + H(+). It participates in tRNA modification. Catalyzes the ATP-dependent 2-thiolation of cytidine in position 32 of tRNA, to form 2-thiocytidine (s(2)C32). The sulfur atoms are provided by the cysteine/cysteine desulfurase (IscS) system. In Burkholderia ambifaria (strain ATCC BAA-244 / DSM 16087 / CCUG 44356 / LMG 19182 / AMMD) (Burkholderia cepacia (strain AMMD)), this protein is tRNA-cytidine(32) 2-sulfurtransferase.